Here is a 2387-residue protein sequence, read N- to C-terminus: Highly reducing polyketide synthase curS1 (2387 aa).

The Ketosynthase family 3 (KS3) domain occupies 10-433 (DVPIAVVGLS…GTNGHVVLES (424 aa)). Active-site for beta-ketoacyl synthase activity residues include C182, H316, and H356. The malonyl-CoA:ACP transacylase (MAT) domain stretch occupies residues 551–891 (FVFTGQGAQW…ELASELFLKG (341 aa)). S641 serves as the catalytic For malonyltransferase activity. The N-terminal hotdog fold stretch occupies residues 940 to 1075 (KSIIGAQVPM…GLITIDYAET (136 aa)). A PKS/mFAS DH domain is found at 940 to 1259 (KSIIGAQVPM…VSELENDSGE (320 aa)). Residues 942 to 1256 (IIGAQVPMMD…DYRVSELEND (315 aa)) form a dehydratase (DH) domain region. H972 serves as the catalytic Proton acceptor; for dehydratase activity. Positions 1103–1259 (SYTYSKEDFY…VSELENDSGE (157 aa)) are C-terminal hotdog fold. D1169 serves as the catalytic Proton donor; for dehydratase activity. An enoylreductase (ER) domain region spans residues 1673-1987 (GLMDTLTFIE…QGKHRGKLVL (315 aa)). The catalytic ketoreductase (KRc) domain stretch occupies residues 2011–2191 (STYLFIGGLG…VAVDLGIMRD (181 aa)). The Carrier domain maps to 2302-2379 (EAVVIITDAL…VFAGKIAEKS (78 aa)). S2339 bears the O-(pantetheine 4'-phosphoryl)serine mark.

Its pathway is mycotoxin biosynthesis. In terms of biological role, highly reducing polyketide synthase; part of the gene cluster that mediates the biosynthesis of 10,11-dehydrocurvularin, a prevalent fungal phytotoxin with heat shock response and immune-modulatory activities. The highly reducing polyketide synthase curS1 is responsible for biosynthesis up to the tetraketide stage. The non-reducing polyketide synthase curS2 then conducts four additional chain extension cycles, producing the unreduced part of the nascent octaketide from C-1 to C-8 in 10,11-dehydrocurvularin. This chain is Highly reducing polyketide synthase curS1, found in Aspergillus terreus.